Consider the following 394-residue polypeptide: Methylthioribose kinase (394 aa).

ATP-binding positions include asparagine 44, lysine 61, and 115-117 (EDL). Aspartate 233 is a substrate binding site. Residue 250-252 (DPE) participates in ATP binding. Arginine 337 provides a ligand contact to substrate.

Belongs to the methylthioribose kinase family. Homodimer.

It carries out the reaction 5-(methylsulfanyl)-D-ribose + ATP = 5-(methylsulfanyl)-alpha-D-ribose 1-phosphate + ADP + H(+). It participates in amino-acid biosynthesis; L-methionine biosynthesis via salvage pathway; S-methyl-5-thio-alpha-D-ribose 1-phosphate from S-methyl-5'-thioadenosine (hydrolase route): step 2/2. Catalyzes the phosphorylation of methylthioribose into methylthioribose-1-phosphate. In Bacillus velezensis (strain DSM 23117 / BGSC 10A6 / LMG 26770 / FZB42) (Bacillus amyloliquefaciens subsp. plantarum), this protein is Methylthioribose kinase.